A 108-amino-acid chain; its full sequence is Structural protein 1 (108 aa).

Positions 1 to 20 (MSRVSEYGVPEGVRESDSDT) are disordered. At 1–77 (MSRVSEYGVP…LKMQMDRLCN (77 aa)) the chain is on the intravirion side. A helical; Signal-anchor for type II membrane protein membrane pass occupies residues 78 to 98 (VLGVVLQMATLALVTYIAFVV). Topologically, residues 99–108 (HTRATSCKRE) are virion surface.

This sequence belongs to the varicellovirus ORF1 protein family. In terms of assembly, homodimer. In terms of processing, phosphorylated.

It localises to the virion membrane. The protein localises to the host Golgi apparatus membrane. This Varicella-zoster virus (strain Dumas) (HHV-3) protein is Structural protein 1.